Here is a 579-residue protein sequence, read N- to C-terminus: ATP-dependent lipid A-core flippase (579 aa).

A run of 5 helical transmembrane segments spans residues 24–44, 63–83, 150–170, 251–271, and 275–295; these read FALS…LPAL, WVPL…FIST, VLGL…IVFA, VIQF…AGQA, and TTTV…FAPL. The ABC transmembrane type-1 domain maps to 25–307; that stretch reads ALSIVGLILT…LTAVNDQLQR (283 aa). Positions 339-575 constitute an ABC transporter domain; sequence LAFRDVGLTY…QGRYAQLHAL (237 aa). ATP is bound at residue 373 to 380; sequence GASGSGKT.

This sequence belongs to the ABC transporter superfamily. Lipid exporter (TC 3.A.1.106) family. Homodimer.

It is found in the cell inner membrane. The enzyme catalyses ATP + H2O + lipid A-core oligosaccharideSide 1 = ADP + phosphate + lipid A-core oligosaccharideSide 2.. Involved in lipopolysaccharide (LPS) biosynthesis. Translocates lipid A-core from the inner to the outer leaflet of the inner membrane. Transmembrane domains (TMD) form a pore in the inner membrane and the ATP-binding domain (NBD) is responsible for energy generation. This chain is ATP-dependent lipid A-core flippase, found in Thiobacillus denitrificans (strain ATCC 25259 / T1).